We begin with the raw amino-acid sequence, 259 residues long: 5'-nucleotidase SurE (259 aa).

A divalent metal cation is bound by residues Asp15, Asp16, Ser46, and Asn102.

This sequence belongs to the SurE nucleotidase family. The cofactor is a divalent metal cation.

It localises to the cytoplasm. The enzyme catalyses a ribonucleoside 5'-phosphate + H2O = a ribonucleoside + phosphate. In terms of biological role, nucleotidase that shows phosphatase activity on nucleoside 5'-monophosphates. In Chlorobium luteolum (strain DSM 273 / BCRC 81028 / 2530) (Pelodictyon luteolum), this protein is 5'-nucleotidase SurE.